The sequence spans 246 residues: tRNA pseudouridine synthase A (246 aa).

The active-site Nucleophile is D51. Y105 serves as a coordination point for substrate.

The protein belongs to the tRNA pseudouridine synthase TruA family.

It carries out the reaction uridine(38/39/40) in tRNA = pseudouridine(38/39/40) in tRNA. In terms of biological role, formation of pseudouridine at positions 38, 39 and 40 in the anticodon stem and loop of transfer RNAs. This Thermoplasma volcanium (strain ATCC 51530 / DSM 4299 / JCM 9571 / NBRC 15438 / GSS1) protein is tRNA pseudouridine synthase A.